The sequence spans 312 residues: Pyridoxal kinase (312 aa).

M1 carries the N-acetylmethionine modification. Residues S12 and T47 each coordinate pyridoxal 5'-phosphate. Residues S12 and T47 each contribute to the pyridoxamine site. S59 is subject to Phosphoserine. Position 113 (D113) interacts with K(+). A pyridoxal 5'-phosphate-binding site is contributed by Y127. T148 contributes to the K(+) binding site. N150 contacts ADP. N150 serves as a coordination point for ATP. S164 carries the post-translational modification Phosphoserine. Residue T186 coordinates K(+). Position 186–187 (186–187) interacts with ADP; it reads TS. 186 to 187 is an ATP binding site; that stretch reads TS. S213 carries the phosphoserine modification. Residues 223 to 226 and 233 to 234 each bind ADP; these read MHKV and TG. Residues 223–226 and 233–234 each bind ATP; these read MHKV and TG. A pyridoxal 5'-phosphate-binding site is contributed by 232-235; it reads GTGD. Pyridoxamine is bound at residue D235. Residue D235 is the Proton acceptor of the active site. S285 carries the phosphoserine modification.

It belongs to the pyridoxine kinase family. Homodimer. Requires Zn(2+) as cofactor. It depends on Mg(2+) as a cofactor. Ubiquitous.

Its subcellular location is the cytoplasm. The protein resides in the cytosol. It carries out the reaction pyridoxal + ATP = pyridoxal 5'-phosphate + ADP + H(+). The catalysed reaction is pyridoxamine + ATP = pyridoxamine 5'-phosphate + ADP + H(+). The enzyme catalyses pyridoxine + ATP = pyridoxine 5'-phosphate + ADP + H(+). Its pathway is cofactor metabolism; pyridoxal 5'-phosphate salvage; pyridoxal 5'-phosphate from pyridoxal: step 1/1. The protein operates within cofactor metabolism; pyridoxal 5'-phosphate salvage; pyridoxine 5'-phosphate from pyridoxine: step 1/1. It participates in cofactor metabolism; pyridoxal 5'-phosphate salvage; pyridoxamine 5'-phosphate from pyridoxamine: step 1/1. With respect to regulation, activated by K(+). Activity is increased in the presence of Na(+). Catalyzes the phosphorylation of the dietary vitamin B6 vitamers pyridoxal (PL), pyridoxine (PN) and pyridoxamine (PM) to form pyridoxal 5'-phosphate (PLP), pyridoxine 5'-phosphate (PNP) and pyridoxamine 5'-phosphate (PMP), respectively. PLP is the active form of vitamin B6, and acts as a cofactor for over 140 different enzymatic reactions. In Ovis aries (Sheep), this protein is Pyridoxal kinase (PDXK).